The primary structure comprises 590 residues: Arginine--tRNA ligase, cytoplasmic (590 aa).

At Ala-2 the chain carries N-acetylalanine. L-arginine is bound by residues 137-139 (SPN), His-148, Tyr-322, Asp-326, and Gln-350. The short motif at 138-149 (PNIAKEMHVGHL) is the 'HIGH' region element. The segment at 470–484 (DTAVYLLYAHARICS) is interaction with tRNA.

The protein belongs to the class-I aminoacyl-tRNA synthetase family.

Its subcellular location is the cytoplasm. The protein resides in the cytosol. The catalysed reaction is tRNA(Arg) + L-arginine + ATP = L-arginyl-tRNA(Arg) + AMP + diphosphate. Forms part of a macromolecular complex that catalyzes the attachment of specific amino acids to cognate tRNAs during protein synthesis. The protein is Arginine--tRNA ligase, cytoplasmic of Arabidopsis thaliana (Mouse-ear cress).